The chain runs to 338 residues: Glyceraldehyde-3-phosphate dehydrogenase (338 aa).

NAD(+) contacts are provided by residues 11-12 and Gly-111; that span reads TI. 140–142 contacts D-glyceraldehyde 3-phosphate; the sequence is SCN. The active-site Nucleophile is the Cys-141. NAD(+) is bound at residue Arg-169. 195–196 contacts D-glyceraldehyde 3-phosphate; that stretch reads HG. An NAD(+)-binding site is contributed by Gln-302.

The protein belongs to the glyceraldehyde-3-phosphate dehydrogenase family. As to quaternary structure, homotetramer.

Its subcellular location is the cytoplasm. It carries out the reaction D-glyceraldehyde 3-phosphate + phosphate + NADP(+) = (2R)-3-phospho-glyceroyl phosphate + NADPH + H(+). The enzyme catalyses D-glyceraldehyde 3-phosphate + phosphate + NAD(+) = (2R)-3-phospho-glyceroyl phosphate + NADH + H(+). It functions in the pathway carbohydrate degradation; glycolysis; pyruvate from D-glyceraldehyde 3-phosphate: step 1/5. In Methanobacterium formicicum, this protein is Glyceraldehyde-3-phosphate dehydrogenase (gap).